The chain runs to 328 residues: Probable cell division protein WhiA (328 aa).

Residues 275–308 (SLEELGRLAEPPMTKDAVAGRIRRLLSMADKRAE) constitute a DNA-binding region (H-T-H motif).

Belongs to the WhiA family.

Its function is as follows. Involved in cell division and chromosome segregation. This is Probable cell division protein WhiA from Corynebacterium jeikeium (strain K411).